A 620-amino-acid polypeptide reads, in one-letter code: Cryptochrome-1 (620 aa).

In terms of domain architecture, Photolyase/cryptochrome alpha/beta spans 3 to 132 (VNAVHWFRKG…EVIVRISHTL (130 aa)). Short sequence motifs (LIR) lie at residues 50-54 (NRWRF), 82-87 (DVFPRL), and 151-156 (KRFQTL). Ser-252 lines the FAD pocket. 4 consecutive short sequence motifs (LIR) follow at residues 255-260 (LRFGCL), 271-276 (DLYKKV), 285-290 (SLYGQL), and 335-339 (TGFPW). Position 289 (Gln-289) interacts with FAD. FAD is bound at residue His-355. The short motif at 379–384 (KVFEEL) is the LIR 8 element. Residue 387-389 (DAD) coordinates FAD. 5 short sequence motifs (LIR) span residues 395 to 400 (GSWMWL), 411 to 416 (HCYCPV), 430 to 435 (RRYLPV), 486 to 491 (QIYQQL), and 492 to 497 (SRYRGL). The interval 592–620 (GTGISAGKRPNPEEETQSVGPKVQRQSTN) is disordered.

It belongs to the DNA photolyase class-1 family. As to quaternary structure, component of the circadian core oscillator, which includes the CRY proteins, CLOCK or NPAS2, BMAL1 or BMAL2, CSNK1E, and the PER proteins. FAD serves as cofactor. (6R)-5,10-methylene-5,6,7,8-tetrahydrofolate is required as a cofactor. Expressed in the retina. High levels found in ganglion cells of the retina.

It localises to the cytoplasm. The protein resides in the nucleus. Functionally, transcriptional repressor which forms a core component of the circadian clock. The circadian clock, an internal time-keeping system, regulates various physiological processes through the generation of approximately 24 hour circadian rhythms in gene expression, which are translated into rhythms in metabolism and behavior. It is derived from the Latin roots 'circa' (about) and 'diem' (day) and acts as an important regulator of a wide array of physiological functions including metabolism, sleep, body temperature, blood pressure, endocrine, immune, cardiovascular, and renal function. Consists of two major components: the central clock, residing in the suprachiasmatic nucleus (SCN) of the brain, and the peripheral clocks that are present in nearly every tissue and organ system. Both the central and peripheral clocks can be reset by environmental cues, also known as Zeitgebers (German for 'timegivers'). The predominant Zeitgeber for the central clock is light, which is sensed by retina and signals directly to the SCN. The central clock entrains the peripheral clocks through neuronal and hormonal signals, body temperature and feeding-related cues, aligning all clocks with the external light/dark cycle. Circadian rhythms allow an organism to achieve temporal homeostasis with its environment at the molecular level by regulating gene expression to create a peak of protein expression once every 24 hours to control when a particular physiological process is most active with respect to the solar day. Transcription and translation of core clock components (CLOCK, NPAS2, BMAL1, BMAL2, PER1, PER2, PER3, CRY1 and CRY2) plays a critical role in rhythm generation, whereas delays imposed by post-translational modifications (PTMs) are important for determining the period (tau) of the rhythms (tau refers to the period of a rhythm and is the length, in time, of one complete cycle). A diurnal rhythm is synchronized with the day/night cycle, while the ultradian and infradian rhythms have a period shorter and longer than 24 hours, respectively. Disruptions in the circadian rhythms contribute to the pathology of cardiovascular diseases, cancer, metabolic syndromes and aging. A transcription/translation feedback loop (TTFL) forms the core of the molecular circadian clock mechanism. Transcription factors, CLOCK or NPAS2 and BMAL1 or BMAL2, form the positive limb of the feedback loop, act in the form of a heterodimer and activate the transcription of core clock genes and clock-controlled genes (involved in key metabolic processes), harboring E-box elements (5'-CACGTG-3') within their promoters. The core clock genes: PER1/2/3 and CRY1/2 which are transcriptional repressors form the negative limb of the feedback loop and interact with the CLOCK|NPAS2-BMAL1|BMAL2 heterodimer inhibiting its activity and thereby negatively regulating their own expression. This heterodimer also activates nuclear receptors NR1D1, NR1D2, RORA, RORB and RORG, which form a second feedback loop and which activate and repress BMAL1 transcription, respectively. CRY1 and CRY2 have redundant functions but also differential and selective contributions at least in defining the pace of the SCN circadian clock and its circadian transcriptional outputs. More potent transcriptional repressor in cerebellum and liver than CRY2, though more effective in lengthening the period of the SCN oscillator. On its side, CRY2 seems to play a critical role in tuning SCN circadian period by opposing the action of CRY1. With CRY2, is dispensable for circadian rhythm generation but necessary for the development of intercellular networks for rhythm synchrony. Capable of translocating circadian clock core proteins such as PER proteins to the nucleus. Interacts with CLOCK:BMAL1 independently of PER proteins and is found at CLOCK:BMAL1-bound sites, suggesting that CRY may act as a molecular gatekeeper to maintain CLOCK:BMAL1 in a poised and repressed state until the proper time for transcriptional activation. In Sylvia borin (Garden warbler), this protein is Cryptochrome-1 (CRY1).